The sequence spans 246 residues: Proteolipid protein DM gamma (246 aa).

The next 4 helical transmembrane spans lie at 19 to 35 (LLAT…FCGC), 71 to 87 (VIYG…IILL), 118 to 134 (VFLT…VFGF), and 206 to 222 (FIVA…ALLI).

The protein belongs to the myelin proteolipid protein family. As to expression, highly expressed in white matter in myelinating shark brain.

The protein localises to the membrane. In Squalus acanthias (Spiny dogfish), this protein is Proteolipid protein DM gamma.